Consider the following 676-residue polypeptide: Exostosin-like 1 (676 aa).

Topologically, residues 1-9 (MQSWRRRKS) are cytoplasmic. Residues 10 to 30 (LWLALSASWLLLVLLGGFSLL) traverse the membrane as a helical; Signal-anchor for type II membrane protein segment. At 31–676 (RLALPPRPRP…RKKYRSLEKP (646 aa)) the chain is on the lumenal side. A disordered region spans residues 238 to 264 (TADTGSSACPWDGRCEQDPGPGQTQRQ). Residue asparagine 269 is glycosylated (N-linked (GlcNAc...) asparagine). A disulfide bond links cysteine 584 and cysteine 634. Positions 610-631 (RQEAAPLAPGGPGPRPKPPAPA) are disordered. Residues 618–631 (PGGPGPRPKPPAPA) are compositionally biased toward pro residues.

The protein belongs to the glycosyltransferase 47 family.

The protein resides in the endoplasmic reticulum membrane. The catalysed reaction is 3-O-{[(1-&gt;4)-beta-D-GlcA-(1-&gt;4)-alpha-D-GlcNAc](n)-(1-&gt;4)-beta-D-GlcA-(1-&gt;3)-beta-D-Gal-(1-&gt;3)-beta-D-Gal-(1-&gt;4)-beta-D-Xyl}-L-seryl-[protein] + UDP-N-acetyl-alpha-D-glucosamine = 3-O-{alpha-D-GlcNAc-[(1-&gt;4)-beta-D-GlcA-(1-&gt;4)-alpha-D-GlcNAc](n)-(1-&gt;4)-beta-D-GlcA-(1-&gt;3)-beta-D-Gal-(1-&gt;3)-beta-D-Gal-(1-&gt;4)-beta-D-Xyl}-L-seryl-[protein] + UDP + H(+). It participates in protein modification; protein glycosylation. Functionally, glycosyltransferase required for the biosynthesis of heparan-sulfate (HS). Transfers N-acetyl-alpha-D-glucosamine to the nascent HS chain (GlcNAcT-II activity). Appears to lack GlcNAcT I and GlcAT-II activities. The protein is Exostosin-like 1 (EXTL1) of Homo sapiens (Human).